Consider the following 272-residue polypeptide: HMP-PP phosphatase (272 aa).

The active-site Nucleophile is D8. The Mg(2+) site is built by D8, D10, and D212.

This sequence belongs to the HAD-like hydrolase superfamily. Cof family. Requires Mg(2+) as cofactor.

It catalyses the reaction 4-amino-2-methyl-5-(diphosphooxymethyl)pyrimidine + H2O = 4-amino-2-methyl-5-(phosphooxymethyl)pyrimidine + phosphate + H(+). Functionally, catalyzes the hydrolysis of 4-amino-2-methyl-5-hydroxymethylpyrimidine pyrophosphate (HMP-PP) to 4-amino-2-methyl-5-hydroxymethylpyrimidine phosphate (HMP-P). The protein is HMP-PP phosphatase of Escherichia coli O157:H7.